Reading from the N-terminus, the 119-residue chain is DNA-binding protein Maeo_0998 (119 aa).

Positions 1-11 (MDIEEIKRQKM) are enriched in basic and acidic residues. The tract at residues 1–36 (MDIEEIKRQKMMELQQQQAQGAPNPEEIQQQQEQER) is disordered. Over residues 15 to 32 (QQQQAQGAPNPEEIQQQQ) the composition is skewed to low complexity.

This sequence belongs to the PDCD5 family.

The polypeptide is DNA-binding protein Maeo_0998 (Methanococcus aeolicus (strain ATCC BAA-1280 / DSM 17508 / OCM 812 / Nankai-3)).